The following is a 314-amino-acid chain: Homoserine kinase (314 aa).

Residue Pro96 to Cys106 coordinates ATP.

It belongs to the GHMP kinase family. Homoserine kinase subfamily.

It is found in the cytoplasm. The catalysed reaction is L-homoserine + ATP = O-phospho-L-homoserine + ADP + H(+). It participates in amino-acid biosynthesis; L-threonine biosynthesis; L-threonine from L-aspartate: step 4/5. Functionally, catalyzes the ATP-dependent phosphorylation of L-homoserine to L-homoserine phosphate. The sequence is that of Homoserine kinase from Mannheimia succiniciproducens (strain KCTC 0769BP / MBEL55E).